A 440-amino-acid polypeptide reads, in one-letter code: Tubulin beta-3 chain (440 aa).

GTP is bound by residues Q2, E60, S129, G133, T134, G135, N195, and N217. E60 is a binding site for Mg(2+). The tract at residues 411–440 (SEYQQYQDATADEEGEYEDEEEEEPEHGYE) is disordered. Residues 420-440 (TADEEGEYEDEEEEEPEHGYE) show a composition bias toward acidic residues.

It belongs to the tubulin family. In terms of assembly, dimer of alpha and beta chains. A typical microtubule is a hollow water-filled tube with an outer diameter of 25 nm and an inner diameter of 15 nM. Alpha-beta heterodimers associate head-to-tail to form protofilaments running lengthwise along the microtubule wall with the beta-tubulin subunit facing the microtubule plus end conferring a structural polarity. Microtubules usually have 13 protofilaments but different protofilament numbers can be found in some organisms and specialized cells. Mg(2+) is required as a cofactor.

It localises to the cytoplasm. The protein localises to the cytoskeleton. Its function is as follows. Tubulin is the major constituent of microtubules, a cylinder consisting of laterally associated linear protofilaments composed of alpha- and beta-tubulin heterodimers. Microtubules grow by the addition of GTP-tubulin dimers to the microtubule end, where a stabilizing cap forms. Below the cap, tubulin dimers are in GDP-bound state, owing to GTPase activity of alpha-tubulin. This chain is Tubulin beta-3 chain (TUBB3), found in Pisum sativum (Garden pea).